We begin with the raw amino-acid sequence, 366 residues long: Holliday junction branch migration complex subunit RuvB (366 aa).

The large ATPase domain (RuvB-L) stretch occupies residues 3 to 183 (ADGLVSAAAS…FGFTAHLDFY (181 aa)). ATP-binding positions include Leu-22, Arg-23, Gly-64, Lys-67, Thr-68, Ser-69, 130–132 (EDF), Arg-173, Tyr-183, and Arg-220. Thr-68 provides a ligand contact to Mg(2+). The segment at 184 to 254 (APDELARVLT…VARAALRIYD (71 aa)) is small ATPAse domain (RuvB-S). Residues 257-366 (GLGLDRLDRA…PEDGLHPGGG (110 aa)) are head domain (RuvB-H). DNA contacts are provided by Arg-312 and Arg-317.

Belongs to the RuvB family. As to quaternary structure, homohexamer. Forms an RuvA(8)-RuvB(12)-Holliday junction (HJ) complex. HJ DNA is sandwiched between 2 RuvA tetramers; dsDNA enters through RuvA and exits via RuvB. An RuvB hexamer assembles on each DNA strand where it exits the tetramer. Each RuvB hexamer is contacted by two RuvA subunits (via domain III) on 2 adjacent RuvB subunits; this complex drives branch migration. In the full resolvosome a probable DNA-RuvA(4)-RuvB(12)-RuvC(2) complex forms which resolves the HJ.

Its subcellular location is the cytoplasm. The catalysed reaction is ATP + H2O = ADP + phosphate + H(+). The RuvA-RuvB-RuvC complex processes Holliday junction (HJ) DNA during genetic recombination and DNA repair, while the RuvA-RuvB complex plays an important role in the rescue of blocked DNA replication forks via replication fork reversal (RFR). RuvA specifically binds to HJ cruciform DNA, conferring on it an open structure. The RuvB hexamer acts as an ATP-dependent pump, pulling dsDNA into and through the RuvAB complex. RuvB forms 2 homohexamers on either side of HJ DNA bound by 1 or 2 RuvA tetramers; 4 subunits per hexamer contact DNA at a time. Coordinated motions by a converter formed by DNA-disengaged RuvB subunits stimulates ATP hydrolysis and nucleotide exchange. Immobilization of the converter enables RuvB to convert the ATP-contained energy into a lever motion, pulling 2 nucleotides of DNA out of the RuvA tetramer per ATP hydrolyzed, thus driving DNA branch migration. The RuvB motors rotate together with the DNA substrate, which together with the progressing nucleotide cycle form the mechanistic basis for DNA recombination by continuous HJ branch migration. Branch migration allows RuvC to scan DNA until it finds its consensus sequence, where it cleaves and resolves cruciform DNA. The sequence is that of Holliday junction branch migration complex subunit RuvB from Frankia alni (strain DSM 45986 / CECT 9034 / ACN14a).